Reading from the N-terminus, the 317-residue chain is MANKKLAFQDIILTLQGFWSKQGANLMQAYDNEVGAGTMSPYTFLRSNGPEPWGAAYVQPSRRPADGRYGENPNRLFQHHQFQVVLKPSPKNIQELYLQSLAALGIDALEHDIRFVEDNWENPSMGCAGIGWEVWIDGQECTQFTYFQQVGGIEVDSVTSEITYGLERIATVIQEVDSVYDLEWGNGVAYGDIFKEPEYEHSKFAFEESNQELLLKLFGEYEQEALDLLDKGLVHPAYDYILKSSHTFNLLDARGAVSVTERAGYMHRVRTMARKVAKTFIEERAKLGFPLLKDEALREKYLGKKGKYTKIVEGEEK.

It belongs to the class-II aminoacyl-tRNA synthetase family. Tetramer of two alpha and two beta subunits.

The protein localises to the cytoplasm. The enzyme catalyses tRNA(Gly) + glycine + ATP = glycyl-tRNA(Gly) + AMP + diphosphate. The protein is Glycine--tRNA ligase alpha subunit of Lactococcus lactis subsp. cremoris (strain SK11).